The following is a 214-amino-acid chain: MIEPLHTAPPLLAAHDLAFSRNEEPVFGPLDFHVDAGEALLVQGDNGAGKTTLLRVLAGLLHVERGQIQIDGKSAKRGDRSRFMAYLGHLPGLKADLSTLENLHFLCGLHGRRAKQMPGSALAIVGLAGYEDALVRQLSAGQRKRLALARLWLSPAPLWLLDEPYANLDLDGITLVNRMISAHLRGGGAALVTTHGAYAAPPVRTRMLTLEVAA.

One can recognise an ABC transporter domain in the interval 12-214; sequence LAAHDLAFSR…TRMLTLEVAA (203 aa). An ATP-binding site is contributed by 44 to 51; it reads GDNGAGKT.

The protein belongs to the ABC transporter superfamily. CcmA exporter (TC 3.A.1.107) family. In terms of assembly, the complex is composed of two ATP-binding proteins (CcmA) and two transmembrane proteins (CcmB).

It localises to the cell inner membrane. The catalysed reaction is heme b(in) + ATP + H2O = heme b(out) + ADP + phosphate + H(+). Part of the ABC transporter complex CcmAB involved in the biogenesis of c-type cytochromes; once thought to export heme, this seems not to be the case, but its exact role is uncertain. Responsible for energy coupling to the transport system. This Xanthomonas axonopodis pv. citri (strain 306) protein is Cytochrome c biogenesis ATP-binding export protein CcmA.